We begin with the raw amino-acid sequence, 419 residues long: 3-isopropylmalate dehydratase large subunit (419 aa).

Residues Cys-302, Cys-362, and Cys-365 each contribute to the [4Fe-4S] cluster site.

Belongs to the aconitase/IPM isomerase family. LeuC type 2 subfamily. Heterodimer of LeuC and LeuD. The cofactor is [4Fe-4S] cluster.

It carries out the reaction (2R,3S)-3-isopropylmalate = (2S)-2-isopropylmalate. It functions in the pathway amino-acid biosynthesis; L-leucine biosynthesis; L-leucine from 3-methyl-2-oxobutanoate: step 2/4. In terms of biological role, catalyzes the isomerization between 2-isopropylmalate and 3-isopropylmalate, via the formation of 2-isopropylmaleate. This Sulfurimonas denitrificans (strain ATCC 33889 / DSM 1251) (Thiomicrospira denitrificans (strain ATCC 33889 / DSM 1251)) protein is 3-isopropylmalate dehydratase large subunit.